Consider the following 715-residue polypeptide: Fatty acid oxidation complex subunit alpha (715 aa).

The tract at residues 1-190 (MIYQGKAITV…KVGAVDAVVA (190 aa)) is enoyl-CoA hydratase/isomerase. Asp297 is a substrate binding site. Residues 312–715 (KDVKLAAVLG…MAKNGQKFFG (404 aa)) are 3-hydroxyacyl-CoA dehydrogenase. Residues Met325, Asp344, 401–403 (VVE), Lys408, and Ser430 contribute to the NAD(+) site. His451 (for 3-hydroxyacyl-CoA dehydrogenase activity) is an active-site residue. Asn454 lines the NAD(+) pocket. Residues Asn501 and Tyr660 each coordinate substrate.

This sequence in the N-terminal section; belongs to the enoyl-CoA hydratase/isomerase family. In the C-terminal section; belongs to the 3-hydroxyacyl-CoA dehydrogenase family. As to quaternary structure, heterotetramer of two alpha chains (FadB) and two beta chains (FadA).

It carries out the reaction a (3S)-3-hydroxyacyl-CoA + NAD(+) = a 3-oxoacyl-CoA + NADH + H(+). It catalyses the reaction a (3S)-3-hydroxyacyl-CoA = a (2E)-enoyl-CoA + H2O. The enzyme catalyses a 4-saturated-(3S)-3-hydroxyacyl-CoA = a (3E)-enoyl-CoA + H2O. The catalysed reaction is (3S)-3-hydroxybutanoyl-CoA = (3R)-3-hydroxybutanoyl-CoA. It carries out the reaction a (3Z)-enoyl-CoA = a 4-saturated (2E)-enoyl-CoA. It catalyses the reaction a (3E)-enoyl-CoA = a 4-saturated (2E)-enoyl-CoA. It functions in the pathway lipid metabolism; fatty acid beta-oxidation. In terms of biological role, involved in the aerobic and anaerobic degradation of long-chain fatty acids via beta-oxidation cycle. Catalyzes the formation of 3-oxoacyl-CoA from enoyl-CoA via L-3-hydroxyacyl-CoA. It can also use D-3-hydroxyacyl-CoA and cis-3-enoyl-CoA as substrate. The sequence is that of Fatty acid oxidation complex subunit alpha from Pseudomonas aeruginosa (strain LESB58).